Consider the following 79-residue polypeptide: Succinate dehydrogenase assembly factor 1, mitochondrial (79 aa).

It belongs to the complex I LYR family. SDHAF1 subfamily. Interacts with sdh2 within an sdh1-sdh2 subcomplex.

The protein resides in the mitochondrion matrix. Functionally, plays an essential role in the assembly of succinate dehydrogenase (SDH), an enzyme complex (also referred to as respiratory complex II) that is a component of both the tricarboxylic acid (TCA) cycle and the mitochondrial electron transport chain, and which couples the oxidation of succinate to fumarate with the reduction of ubiquinone (coenzyme Q) to ubiquinol. Promotes maturation of the iron-sulfur protein subunit sdh2 of the SDH catalytic dimer, protecting it from the deleterious effects of oxidants. May act together with SDHAF3. In Schizosaccharomyces pombe (strain 972 / ATCC 24843) (Fission yeast), this protein is Succinate dehydrogenase assembly factor 1, mitochondrial.